We begin with the raw amino-acid sequence, 313 residues long: WUSCHEL-related homeobox 5 (313 aa).

A disordered region spans residues 1–32; sequence METTTTTLGGGGGGRAGGFSDPPSPLSPPLSP. Over residues 8-17 the composition is skewed to gly residues; it reads LGGGGGGRAG. Over residues 22–31 the composition is skewed to pro residues; the sequence is PPSPLSPPLS. The segment at residues 40 to 104 is a DNA-binding region (homeobox; WUS-type); the sequence is LANARWTPTK…NHKARQRQKQ (65 aa). Disordered regions lie at residues 224–247 and 271–313; these read AAGR…GRET and CAAV…SGGR. Low complexity predominate over residues 271-301; that stretch reads CAAVSPTTPSASASFSWESESSDSPSSEAPP.

It belongs to the WUS homeobox family.

It localises to the nucleus. In terms of biological role, transcription factor which may be involved in developmental processes. In Oryza sativa subsp. japonica (Rice), this protein is WUSCHEL-related homeobox 5 (WOX5).